A 391-amino-acid polypeptide reads, in one-letter code: Histamine H4 receptor (391 aa).

At 1–19 (MSESNGTDVLPLTAQVPLA) the chain is on the extracellular side. N-linked (GlcNAc...) asparagine glycosylation is present at Asn-5. Residues 20-40 (FLMSLLAFAITIGNAVVILAF) form a helical membrane-spanning segment. Residues 41 to 52 (VADRNLRHRSNY) lie on the Cytoplasmic side of the membrane. Residues 53–73 (FFLNLAISDFFVGVISIPLYI) form a helical membrane-spanning segment. The Extracellular segment spans residues 74-87 (PHTLFNWNFGSGIC). Cysteines 87 and 166 form a disulfide. The helical transmembrane segment at 88-108 (MFWLITDYLLCTASVYSIVLI) threads the bilayer. Over 109-131 (SYDRYQSVSNAVRYRAQHTGILK) the chain is Cytoplasmic. A helical transmembrane segment spans residues 132-152 (IVAQMVAVWILAFLVNGPMIL). Residues 153 to 174 (ASDSWKNSTNTEECEPGFVTEW) are Extracellular-facing. Asn-159 is a glycosylation site (N-linked (GlcNAc...) asparagine). The helical transmembrane segment at 175 to 195 (YILAITAFLEFLLPVSLVVYF) threads the bilayer. Topologically, residues 196 to 306 (SVQIYWSLWK…LLRGRKLARS (111 aa)) are cytoplasmic. A helical transmembrane segment spans residues 307–327 (LAVLLSAFAICWAPYCLFTIV). Residues 328–343 (LSTYRRGERPKSIWYS) lie on the Extracellular side of the membrane. A helical transmembrane segment spans residues 344–364 (IAFWLQWFNSLINPFLYPLCH). Residues 365 to 391 (RRFQKAFWKILCVTKQPAPSQTQSVSS) are Cytoplasmic-facing.

The protein belongs to the G-protein coupled receptor 1 family. Interacts with TSPAN4.

It is found in the cell membrane. Its function is as follows. The H4 subclass of histamine receptors could mediate the histamine signals in peripheral tissues. Displays a significant level of constitutive activity (spontaneous activity in the absence of agonist). The polypeptide is Histamine H4 receptor (Hrh4) (Rattus norvegicus (Rat)).